The sequence spans 310 residues: MLIAGPTASGKSALALRLAQMHGGVVINTDSMQMYRDLRIITARPTPEEEALVPHRLYGTVDAAVNFSAGAFVEAAAGALAEARASGLLPIFIGGTGLYFKALTRGLSLVPPVPAEIRDAVRLRLDRDGVAALHAELARHDPAAAERLAPADRSRIARALEVVLATGRPLADWHGEASPPLLPPDGVTAVFLAPEREALYARIDARFAAMLRAGALDEVAALAERRLDPLLPAMKAHGVPALIRHLRGEISLDEAAVIGAADTRHYAKRQFTWFRHQLPEFRWVTPEEAGRVVDQEFQGNPSCTTSTASS.

Position 5-12 (5-12 (GPTASGKS)) interacts with ATP. 7–12 (TASGKS) provides a ligand contact to substrate. Residues 30–33 (DSMQ) form an interaction with substrate tRNA region.

This sequence belongs to the IPP transferase family. Monomer. The cofactor is Mg(2+).

It carries out the reaction adenosine(37) in tRNA + dimethylallyl diphosphate = N(6)-dimethylallyladenosine(37) in tRNA + diphosphate. In terms of biological role, catalyzes the transfer of a dimethylallyl group onto the adenine at position 37 in tRNAs that read codons beginning with uridine, leading to the formation of N6-(dimethylallyl)adenosine (i(6)A). In Rhodopseudomonas palustris (strain HaA2), this protein is tRNA dimethylallyltransferase.